A 137-amino-acid chain; its full sequence is Large ribosomal subunit protein uL16 (137 aa).

This sequence belongs to the universal ribosomal protein uL16 family. In terms of assembly, part of the 50S ribosomal subunit.

Functionally, binds 23S rRNA and is also seen to make contacts with the A and possibly P site tRNAs. The protein is Large ribosomal subunit protein uL16 of Sinorhizobium medicae (strain WSM419) (Ensifer medicae).